The chain runs to 469 residues: Putative diacyglycerol O-acyltransferase MT0231 (469 aa).

Histidine 139 acts as the Proton acceptor in catalysis.

It belongs to the long-chain O-acyltransferase family.

The enzyme catalyses an acyl-CoA + a 1,2-diacyl-sn-glycerol = a triacyl-sn-glycerol + CoA. Its pathway is glycerolipid metabolism; triacylglycerol biosynthesis. The sequence is that of Putative diacyglycerol O-acyltransferase MT0231 from Mycobacterium tuberculosis (strain CDC 1551 / Oshkosh).